The following is a 138-amino-acid chain: MATILVDVVSAEASIFSGQAKFVALPGESGELGILPGHTPLITRIQPGAVRIEKEDGSEEFVFVAGGILEVQPKHVTVLADTAIRGGDLDEAKAQEAKRAAEELMQNQSSDLDLARAQSELAVAAAQLAAIARLRRKK.

It belongs to the ATPase epsilon chain family. F-type ATPases have 2 components, CF(1) - the catalytic core - and CF(0) - the membrane proton channel. CF(1) has five subunits: alpha(3), beta(3), gamma(1), delta(1), epsilon(1). CF(0) has three main subunits: a, b and c.

It localises to the cell inner membrane. Produces ATP from ADP in the presence of a proton gradient across the membrane. This is ATP synthase epsilon chain from Cupriavidus necator (strain ATCC 17699 / DSM 428 / KCTC 22496 / NCIMB 10442 / H16 / Stanier 337) (Ralstonia eutropha).